The following is a 227-amino-acid chain: Cytidylate kinase (227 aa).

12–20 lines the ATP pocket; that stretch reads GPSGAGKGT.

This sequence belongs to the cytidylate kinase family. Type 1 subfamily.

The protein resides in the cytoplasm. It catalyses the reaction CMP + ATP = CDP + ADP. The enzyme catalyses dCMP + ATP = dCDP + ADP. The protein is Cytidylate kinase of Xanthomonas axonopodis pv. citri (strain 306).